A 284-amino-acid polypeptide reads, in one-letter code: Probable endonuclease 4 (284 aa).

Residues His69, His109, Glu145, Asp179, His182, His216, Asp229, His231, and Glu261 each coordinate Zn(2+).

The protein belongs to the AP endonuclease 2 family. Requires Zn(2+) as cofactor.

It carries out the reaction Endonucleolytic cleavage to 5'-phosphooligonucleotide end-products.. Endonuclease IV plays a role in DNA repair. It cleaves phosphodiester bonds at apurinic or apyrimidinic (AP) sites, generating a 3'-hydroxyl group and a 5'-terminal sugar phosphate. In Chlorobium phaeobacteroides (strain BS1), this protein is Probable endonuclease 4.